The sequence spans 541 residues: Chaperonin GroEL (541 aa).

ATP is bound by residues 29-32, 86-90, Gly413, 478-480, and Asp494; these read TLGP, DGTTT, and NAL.

This sequence belongs to the chaperonin (HSP60) family. Forms a cylinder of 14 subunits composed of two heptameric rings stacked back-to-back. Interacts with the co-chaperonin GroES.

The protein localises to the cytoplasm. It carries out the reaction ATP + H2O + a folded polypeptide = ADP + phosphate + an unfolded polypeptide.. In terms of biological role, together with its co-chaperonin GroES, plays an essential role in assisting protein folding. The GroEL-GroES system forms a nano-cage that allows encapsulation of the non-native substrate proteins and provides a physical environment optimized to promote and accelerate protein folding. The polypeptide is Chaperonin GroEL (Lachnoclostridium phytofermentans (strain ATCC 700394 / DSM 18823 / ISDg) (Clostridium phytofermentans)).